A 286-amino-acid chain; its full sequence is Urease accessory protein UreD 2 (286 aa).

Belongs to the UreD family. UreD, UreF and UreG form a complex that acts as a GTP-hydrolysis-dependent molecular chaperone, activating the urease apoprotein by helping to assemble the nickel containing metallocenter of UreC. The UreE protein probably delivers the nickel.

Its subcellular location is the cytoplasm. In terms of biological role, required for maturation of urease via the functional incorporation of the urease nickel metallocenter. This chain is Urease accessory protein UreD 2, found in Bradyrhizobium sp. (strain ORS 278).